The primary structure comprises 361 residues: Ankyrin repeat domain-containing protein 16 (361 aa).

ANK repeat units follow at residues 36–66 (AGDT…DIEA), 70–99 (DYKR…AVDC), 103–132 (ADWT…NPLL), 136–165 (DGWN…GAWK), 170–200 (IRRT…EPDY), 204–234 (CGVT…CLSA), 238–268 (LGAQ…DVDV), 273–302 (THLT…DINS), and 306–335 (KNRS…KDSE).

As to quaternary structure, interacts with AARS; the interaction is direct.

The protein resides in the cytoplasm. Its subcellular location is the nucleus. Required to prevent the misactivation of serine (Ser) with tRNA(Ala) by promoting the hydrolysis of Ser-mischarged tRNA(Ala), thereby playing a role in translational fidelity. Binds directly to the catalytic domain of AARS/AlaRS and captures Ser that is misactivated by AARS/AlaRS, preventing the charging of Ser adenylates to tRNA(Ala) and precluding Ser misincorporation in nascent peptides. This is Ankyrin repeat domain-containing protein 16 from Homo sapiens (Human).